We begin with the raw amino-acid sequence, 387 residues long: MEKIEEQFANLHIVKCSLGTKEPTYLLGIDTSKTVQAGKENLVAVLCSNGSIRIYDKERLSVLREFSGYPGLLNGVRFANSCDSVYSACTDGTVKCWDARVAREKPVQLFKGYPSNIFISFDINCNDHIICAGTEKVDDDALLVFWDARMNSQDLSTTKDPLGAYSETHSDDVTQVRFHPSNPNMVVSGSSDGLVNVFDINIDNEEDALVTTCNSISSVSCIGWSGKGYKQIYCMTHDEGFYWWDLNHLDTDEPVTRLNIQDVREVVNMKEDALDYLIGGLYHEKTDTLHVIGGTNKGRIHLMNCSVSGLTHVTSLQGGHAATVRSFCWNVQDDSLLTGGEDAQLLLWKPGAIEKTFTKKESMKIASSVHQRVRVHSNDSYKRRKKQ.

WD repeat units lie at residues 21–65 (KEPT…VLRE), 68–107 (GYPGLLNGVRFANSCDSVYSACTDGTVKCWDARVAREKPV), 112–156 (GYPS…QDLS), 168–208 (THSD…EEDA), 214–254 (NSIS…TDEP), and 319–358 (GHAATVRSFCWNVQDDSLLTGGEDAQLLLWKPGAIEKTFT).

The protein is WD repeat-containing protein 89 (WDR89) of Pongo abelii (Sumatran orangutan).